A 510-amino-acid chain; its full sequence is Probable RNA-binding protein 46 (510 aa).

The disordered stretch occupies residues 23-42 (ENGQRKFGGPPPGWEGPPPP). Positions 31-42 (GPPPGWEGPPPP) are enriched in pro residues. 3 RRM domains span residues 45–123 (REVF…VSLD), 125–207 (CRLF…WAEP), and 220–292 (RVLY…LAKP).

Expressed in the testis and ovary.

It localises to the cytoplasm. Essential for male and female fertility, playing a crucial role in regulating germ cell development by ensuring the proper progression of meiosis prophase I. In Danio rerio (Zebrafish), this protein is Probable RNA-binding protein 46 (rbm46).